A 199-amino-acid chain; its full sequence is 3-isopropylmalate dehydratase small subunit (199 aa).

It belongs to the LeuD family. LeuD type 1 subfamily. In terms of assembly, heterodimer of LeuC and LeuD.

The catalysed reaction is (2R,3S)-3-isopropylmalate = (2S)-2-isopropylmalate. It participates in amino-acid biosynthesis; L-leucine biosynthesis; L-leucine from 3-methyl-2-oxobutanoate: step 2/4. Its function is as follows. Catalyzes the isomerization between 2-isopropylmalate and 3-isopropylmalate, via the formation of 2-isopropylmaleate. The polypeptide is 3-isopropylmalate dehydratase small subunit (Bacillus licheniformis (strain ATCC 14580 / DSM 13 / JCM 2505 / CCUG 7422 / NBRC 12200 / NCIMB 9375 / NCTC 10341 / NRRL NRS-1264 / Gibson 46)).